The sequence spans 569 residues: MLO-like protein 10 (569 aa).

The Extracellular portion of the chain corresponds to 1 to 41 (MATRCFWCWTTLLFCSQLLTGFARASSAGGAKEKGLSQTPT). Residues 42–62 (WAVALVCTFFILVSVLLEKAL) form a helical membrane-spanning segment. At 63–85 (HRVATWLWEKHKNSLLEALEKIK) the chain is on the cytoplasmic side. A helical transmembrane segment spans residues 86-106 (AELMILGFISLLLTFGEQYIL). Topologically, residues 107–163 (KICIPEKAAASMLPCPAPSTHDQDKTHRRRLAAATTSSRCDEGHEPLIPATGLHQLH) are extracellular. A helical transmembrane segment spans residues 164–184 (ILLFFMAAFHILYSFITMMLG). Residues 185–286 (RLKIRGWKKW…IKRSLEDDFK (102 aa)) are Cytoplasmic-facing. The helical transmembrane segment at 287 to 307 (VVVGISPLLWASFVIFLLLNV) threads the bilayer. Residue N308 is a topological domain, extracellular. Residues 309-329 (GWEALFWASILPVLIILAVST) form a helical membrane-spanning segment. Residues 330 to 372 (KLQAILTRMALGITERHAVVQGIPLVHGSDKYFWFNRPQLLLH) are Cytoplasmic-facing. A helical membrane pass occupies residues 373 to 393 (LLHFALFQNAFQLTYFFWVWY). Over 394–413 (SFGLKSCFHTDFKLVIVKLS) the chain is Extracellular. The helical transmembrane segment at 414-434 (LGVGALILCSYITLPLYALVT) threads the bilayer. At 435-569 (QMGSNMKKAV…VKNVPANDID (135 aa)) the chain is on the cytoplasmic side. The tract at residues 447–468 (EQMAKALKKWHMTVKKKKGKAR) is calmodulin-binding.

The protein belongs to the MLO family.

It is found in the membrane. In terms of biological role, may be involved in modulation of pathogen defense and leaf cell death. Activity seems to be regulated by Ca(2+)-dependent calmodulin binding and seems not to require heterotrimeric G proteins. In Arabidopsis thaliana (Mouse-ear cress), this protein is MLO-like protein 10 (MLO10).